The chain runs to 419 residues: Erythromycin esterase type II (419 aa).

This enzyme confers resistance to erythromycin through inactivation by hydrolyzing the lactone ring of the antibiotic. The sequence is that of Erythromycin esterase type II (ereB) from Escherichia coli.